A 235-amino-acid polypeptide reads, in one-letter code: RNA polymerase sigma-E factor (235 aa).

A Polymerase core binding motif is present at residues 82-95; that stretch reads DLISVGTIGLIKAV. Residues 202–221 constitute a DNA-binding region (H-T-H motif); sequence QKEVADMLGISQSYISRLEK.

This sequence belongs to the sigma-70 factor family.

Sigma factors are initiation factors that promote the attachment of RNA polymerase to specific initiation sites and are then released. This sigma factor is responsible for the expression of sporulation specific genes. The polypeptide is RNA polymerase sigma-E factor (sigE) (Clostridium acetobutylicum (strain ATCC 824 / DSM 792 / JCM 1419 / IAM 19013 / LMG 5710 / NBRC 13948 / NRRL B-527 / VKM B-1787 / 2291 / W)).